The chain runs to 617 residues: Coiled-coil domain-containing protein 93 (617 aa).

The span at 1 to 16 shows a compositional bias: basic and acidic residues; that stretch reads MVVPRGQEHRAPQEVE. Positions 1–20 are disordered; it reads MVVPRGQEHRAPQEVETRED. Coiled-coil stretches lie at residues 285–474 and 546–614; these read DEIK…IDEV and LRQM…KLKA.

Belongs to the CCDC93 family.

The protein resides in the early endosome. May be involved in copper-dependent ATP7A trafficking between the trans-Golgi network and vesicles in the cell periphery. This Gallus gallus (Chicken) protein is Coiled-coil domain-containing protein 93 (CCDC93).